Here is a 95-residue protein sequence, read N- to C-terminus: Aspartyl/glutamyl-tRNA(Asn/Gln) amidotransferase subunit C (95 aa).

It belongs to the GatC family. Heterotrimer of A, B and C subunits.

The catalysed reaction is L-glutamyl-tRNA(Gln) + L-glutamine + ATP + H2O = L-glutaminyl-tRNA(Gln) + L-glutamate + ADP + phosphate + H(+). It carries out the reaction L-aspartyl-tRNA(Asn) + L-glutamine + ATP + H2O = L-asparaginyl-tRNA(Asn) + L-glutamate + ADP + phosphate + 2 H(+). Allows the formation of correctly charged Asn-tRNA(Asn) or Gln-tRNA(Gln) through the transamidation of misacylated Asp-tRNA(Asn) or Glu-tRNA(Gln) in organisms which lack either or both of asparaginyl-tRNA or glutaminyl-tRNA synthetases. The reaction takes place in the presence of glutamine and ATP through an activated phospho-Asp-tRNA(Asn) or phospho-Glu-tRNA(Gln). In Pseudomonas syringae pv. syringae (strain B728a), this protein is Aspartyl/glutamyl-tRNA(Asn/Gln) amidotransferase subunit C.